We begin with the raw amino-acid sequence, 1039 residues long: MNTQSKVYRTGEEIYDNLPCDSYFNMNAIRNLGIPTTFPTIGTFTLDSTTLGLQPQGQGPSPQQQQHQQQQQQQQQQHQQNMHHHQHQQQHMQQQQQQQQHQQQHQQQQHQQQQQHQQQQQQQQQHPTIGMFDANEVNDVIQNPPQIGVFQSNSVLTNGAGSGSSIFGSQSSNSSAAAADPSQTTRETGIIEKLLHSYGFIQCCERQARLFFHFSQFSGNIDHLKIGDPVEFEMTYDRRTGKPIASQVSKIAPEVVLSEERVTGTVTTELRTDSANNVLNSSETTGRISYENRGECFFLPYTKDDVEGNVNLRAGDKVSFQIATNQRGNLGACHIRLENPAQPVKYRGVVCSMKESFGFIERADVVKEIFFHFSEAEGNVELRPGDDVEFTIQTRSSASVPPQGREFACNITRLAPGSVIFEDVDSTVYKGQVLKSLDRNNPVRQNNDPLPGRIRYRALDYSEVEVPFGDKDQKGDFTLRHGDWVQFLLATDRRDQLQRATSIALLDETFKVSGEKREQGTIASLKEGFGFLRCVERQARLFFHFTEVLDTSREIDINDEVEFTVIQEPGLAYNNSRLQAIRIKHLPPNSVQFETLVASNIEGCVTREAPKSPIKSQDRVEGGVITYEHADVKKTIMYFLKDCEKPPRIGERVRFDIYMVKRNKECIAVNVQQVSLHQQQQQQQQQLHLNQSNAGANINQNDQLGGLSNGISSSSSNASLQNGYVMHGSPGGSTSSVGSNNPVHLDEFKMENNNHAGSDAGQVYRGFIAVMKENFGFIETLSHDEEVFFHFSNYMGNPNWLELGQEVEYTLARNGNTSVSGNCLPAENVRMLPKNSIPQPAVLETTHNGVVARPLRCINPDQQEYAGLIEILDELRTTVISQHEFGITSLVNKRDLLQKGDLVSFRIDESGRAACVNAVRQKKRATVDSIKGQFGFLNFEVEDGKKLFFHMSEVQGNTVALHPGDTVEFSVVTNQRNGKSSACNVLKINDRPDRLISRLKLNGDDTVPRLILIRAPKGPQGKGFSVLARHPRIPGNLVE.

Residues 49–62 (TTLGLQPQGQGPSP) show a composition bias toward polar residues. Disordered stretches follow at residues 49–126 (TTLG…QQQH) and 165–184 (SIFGSQSSNSSAAAADPSQT). Low complexity-rich tracts occupy residues 63 to 80 (QQQQHQQQQQQQQQQHQQ), 89 to 126 (QQHMQQQQQQQQHQQQHQQQQHQQQQQHQQQQQQQQQH), and 165 to 182 (SIFGSQSSNSSAAAADPS). A CSD 1 domain is found at 186 to 250 (RETGIIEKLL…GKPIASQVSK (65 aa)). One can recognise a CSD 2; degenerate domain in the interval 261 to 337 (RVTGTVTTEL…GNLGACHIRL (77 aa)). In terms of domain architecture, CSD 3 spans 345–413 (KYRGVVCSMK…GREFACNITR (69 aa)). Residues 428 to 503 (VYKGQVLKSL…RDQLQRATSI (76 aa)) enclose the CSD 4; degenerate domain. Residues 517-585 (REQGTIASLK…SRLQAIRIKH (69 aa)) form the CSD 5 domain. The CSD 6; degenerate domain maps to 593 to 673 (FETLVASNIE…KECIAVNVQQ (81 aa)). Residues 721-741 (QNGYVMHGSPGGSTSSVGSNN) form a disordered region. Residues 732 to 741 (GSTSSVGSNN) are compositionally biased toward low complexity. The CSD 7 domain occupies 763–831 (VYRGFIAVMK…NCLPAENVRM (69 aa)). The CSD 8; degenerate domain maps to 846–919 (THNGVVARPL…SGRAACVNAV (74 aa)). Residues 922–987 (KKRATVDSIK…GKSSACNVLK (66 aa)) form the CSD 9 domain.

Belongs to the UNR family. As to quaternary structure, interacts with Sxl; cooperates with Sxl to prevent translation of msl-2 transcripts. Interacts with mle; promoting association between mle and roX2 non-coding RNA. Interacts (via CSD domain 7-9) with pAbp; promoting translation inhibition of msl-2 transcripts.

It is found in the cytoplasm. Functionally, RNA-binding protein that acts as a regulator of dosage compensation in both males and females. In males, acts as positive regulator of dosage compensation by promoting assembly of the MSL complex, a multiprotein complex that mediates X-chromosome dosage compensation. Promotes MSL complex assembly via association with roX1 and roX2 non-coding RNA components of the MSL complex, facilitating the interaction between non-coding RNAs and mle. In females, acts as an inhibitor of dosage compensation together with Sxl by preventing production of msl-2 protein, an essential component of the MSL complex. Specifically binds to the 3'-UTR of msl-2 transcripts, and cooperates with Sxl to prevent translation initiation of msl-2 transcripts. Mechanistically, Sxl and Unr inhibit translation initiation by preventing ribosome recruitment after pAbp-mediated recruitment of the eIF4F complex. This is RNA-binding protein Unr from Drosophila melanogaster (Fruit fly).